A 225-amino-acid polypeptide reads, in one-letter code: UPF0758 protein Swoo_4561 (225 aa).

One can recognise an MPN domain in the interval 102 to 224; that stretch reads ILSDPDLTRD…IVSFAERGWI (123 aa). 3 residues coordinate Zn(2+): H173, H175, and D186. Residues 173-186 carry the JAMM motif motif; that stretch reads HNHPSGVAEPSHAD.

Belongs to the UPF0758 family.

This Shewanella woodyi (strain ATCC 51908 / MS32) protein is UPF0758 protein Swoo_4561.